The primary structure comprises 253 residues: Small ribosomal subunit protein uS3 (253 aa).

The 69-residue stretch at 38-106 (IRKYIHARLS…EVQINIFEIK (69 aa)) folds into the KH type-2 domain. Residues 216-253 (AGMDKKQAGQGGGKGGDSPRGDRKPFNKGGKPDARKRK) are disordered. The span at 232 to 253 (DSPRGDRKPFNKGGKPDARKRK) shows a compositional bias: basic and acidic residues.

Belongs to the universal ribosomal protein uS3 family. As to quaternary structure, part of the 30S ribosomal subunit. Forms a tight complex with proteins S10 and S14.

Binds the lower part of the 30S subunit head. Binds mRNA in the 70S ribosome, positioning it for translation. This is Small ribosomal subunit protein uS3 from Flavobacterium psychrophilum (strain ATCC 49511 / DSM 21280 / CIP 103535 / JIP02/86).